A 391-amino-acid polypeptide reads, in one-letter code: Cytochrome P450 165A3 (391 aa).

A disordered region spans residues 1 to 22 (MFEEKNALRGTEIHRRERFDPG). Cysteine 342 provides a ligand contact to heme.

It belongs to the cytochrome P450 family. The cofactor is heme.

The protein operates within antibiotic biosynthesis; vancomycin biosynthesis. Its function is as follows. Involved in the coupling of aromatic side chains of the heptapeptide of vancomycin. The protein is Cytochrome P450 165A3 (cyp165A3) of Amycolatopsis orientalis (Nocardia orientalis).